The sequence spans 175 residues: Adenine phosphoribosyltransferase (175 aa).

It belongs to the purine/pyrimidine phosphoribosyltransferase family. Homodimer.

The protein localises to the cytoplasm. The catalysed reaction is AMP + diphosphate = 5-phospho-alpha-D-ribose 1-diphosphate + adenine. It functions in the pathway purine metabolism; AMP biosynthesis via salvage pathway; AMP from adenine: step 1/1. In terms of biological role, catalyzes a salvage reaction resulting in the formation of AMP, that is energically less costly than de novo synthesis. The sequence is that of Adenine phosphoribosyltransferase from Clavibacter michiganensis subsp. michiganensis (strain NCPPB 382).